The chain runs to 461 residues: pre-mRNA splicing regulator USH1G (461 aa).

3 ANK repeats span residues 31–60 (DGMT…DPDK), 64–93 (WGNT…NIWC), and 97–126 (DYHT…KQSS). Residues 329-368 (LGREDGGLDGAGTPRGRLHSSPSLDDDSLGSANSLQDRSC) are disordered. The 63-residue stretch at 385–447 (LEPETSPLET…KILGAVRRRR (63 aa)) folds into the SAM domain. Position 422 is a phosphoserine (S422).

Part of a complex composed of USH1C, USH1G and MYO7A. Interacts with USH1C (via the first PDZ domain). Interacts with PDZD7. Interacts with CDH23 and PCDH15; these interactions may recruit USH1G to the plasma membrane. Interacts with intraflagellar transport proteins IFT20, IFT52 and IFT57. Interacts with splicing factors SF3B1, PRPF6, PRPF31 and SON. Interacts with the U4/U6.U5 tri-small nuclear ribonucleoprotein (tri-snRNP) complex in the presence of pre-mRNAs. Interacts (via SAM domain) with MAGI2 (via PDZ 6 domain); the interaction is triggered by phosphorylation of USH1G by CK2 and negatively regulates MAGI2-mediated endocytosis. In terms of tissue distribution, detected in stereocilia from cochlear hair cells (at protein level). Detected in retinal photoreceptor cell cilia (at protein level). Highly expressed in the cochlea, testis, cerebellum and eye, and low levels in brain, thymus and spleen. Significant signals detected in the neurosensory epithelium of inner ear cochlea and saccule, especially in inner and outer hair cells.

It localises to the cytoplasm. The protein resides in the cytosol. The protein localises to the cytoskeleton. It is found in the cell membrane. Its subcellular location is the cell projection. It localises to the cilium. The protein resides in the nucleus speckle. The protein localises to the nucleus. It is found in the cajal body. Its subcellular location is the microtubule organizing center. It localises to the centrosome. The protein resides in the photoreceptor inner segment. Its function is as follows. Plays a role in pre-mRNA splicing by regulating the release and transfer of U4/U6.U5 tri-small nuclear ribonucleoprotein (tri-snRNP) complexes from their assembly site in Cajal bodies to nuclear speckles, thereby contributing to the assembly of the pre-catalytic spliceosome on target pre-mRNAs. May also participate in recycling of snRNPs back to Cajal bodies during splicing. Plays a role in regulating MAGI2-mediated endocytosis. Anchoring/scaffolding protein that is a part of the functional network formed by USH1C, USH1G, CDH23 and MYO7A that mediates mechanotransduction in cochlear hair cells. Required for normal development and maintenance of cochlear hair cell bundles. Required for normal hearing. The sequence is that of pre-mRNA splicing regulator USH1G (Ush1g) from Mus musculus (Mouse).